We begin with the raw amino-acid sequence, 1230 residues long: Cullin-associated NEDD8-dissociated protein 1 (1230 aa).

An N-acetylalanine modification is found at alanine 2. 12 HEAT repeats span residues 2-39, 44-81, 83-119, 131-165, 171-208, 210-247, 248-282, 289-366, 370-407, 424-467, 471-510, and 515-552; these read ASAS…KDSI, DSER…KVKE, QVET…ELPP, CKKI…LSRQ, NFHP…SCGN, VFVD…QAGH, RIGE…FESF, EVYP…TRHE, EFYK…QTRP, PLTM…VLPG, QHIP…NHSP, and PHVQ…VIRP. Lysine 55 is subject to N6-acetyllysine. Positions 315–344 are disordered; the sequence is DEDEDENAMDADGGDDDDQGSDDEYSDDDD. Serine 335 carries the post-translational modification Phosphoserine. Residue serine 558 is modified to Phosphoserine. HEAT repeat units lie at residues 563–602, 606–643, 646–683, 688–725, 729–768, 770–808, 809–845, 852–889, 890–927, 928–960, 961–998, 1002–1039, 1043–1097, 1099–1133, and 1140–1189; these read PYIK…NLGD, PDLS…LKID, PVLG…NYSD, AMID…VYPS, KISG…TGTN, LGYM…ALTR, ACPK…LGEV, SGQL…GNLP, EYLP…GLKP, YVEN…KLTL, IDPE…DHPQ, PLLK…NKPS, DLLD…DSCL, RLDI…LSTL, and QRLD…IPEA. Lysine 971 carries the N6-acetyllysine modification.

This sequence belongs to the CAND family. In terms of assembly, interacts with TBP. Part of a complex that contains CUL1 and RBX1. Interacts with unneddylated cullins: interacts with CUL1, CUL2, CUL3, CUL4A, CUL4B and CUL5. Does not bind neddylated CUL1. Interaction with cullins is abolished in presence of COMMD1, which antagonizes with CAND1 for interacting with cullins. Interacts with ERCC6. Interacts with DCUN1D1, DCUN1D2, DCUN1D3, DCUN1D4 and DCUN1D5; these interactions are bridged by cullins and strongly inhibits the neddylation of cullins. As to expression, detected in heart, brain, spleen, liver, skeletal muscle, kidney and testis.

The protein resides in the cytoplasm. The protein localises to the nucleus. Functionally, key assembly factor of SCF (SKP1-CUL1-F-box protein) E3 ubiquitin ligase complexes that promotes the exchange of the substrate-recognition F-box subunit in SCF complexes, thereby playing a key role in the cellular repertoire of SCF complexes. Acts as a F-box protein exchange factor. The exchange activity of CAND1 is coupled with cycles of neddylation conjugation: in the deneddylated state, cullin-binding CAND1 binds CUL1-RBX1, increasing dissociation of the SCF complex and promoting exchange of the F-box protein. Probably plays a similar role in other cullin-RING E3 ubiquitin ligase complexes. May indirectly enhance transcription from various types of promoters. The chain is Cullin-associated NEDD8-dissociated protein 1 (Cand1) from Rattus norvegicus (Rat).